The chain runs to 333 residues: MSATIRIAVDAMSGDLGPRVAIDAAQNFLQCHSDLEITLVGDESQLQQAHSLTGKNSRLHYLHAPDVVTMADDPLSALRHKKNSSMWKSLELLCLDRADACVSAGNTGALLAMARHQIKTLPGIERPAICKSMPVRSGVTYLLDLGANIDVGPELLHQFALMGAALARAAGVANPRVSLLNIGTEEYKGTQVLQQAQVLLQSDNSFTYSGFVEANRIFNGDVDVIVCDGFHGNVALKASEGVAQFIADKIAVEFKRHVFSRVMAFLAWPTLRRLKLQLNPARYNGASFLGLQKPVIKSHGNANEQAFIHALEVALQQVQERVPQRILEQISLH.

Belongs to the PlsX family. Homodimer. Probably interacts with PlsY.

Its subcellular location is the cytoplasm. It carries out the reaction a fatty acyl-[ACP] + phosphate = an acyl phosphate + holo-[ACP]. The protein operates within lipid metabolism; phospholipid metabolism. In terms of biological role, catalyzes the reversible formation of acyl-phosphate (acyl-PO(4)) from acyl-[acyl-carrier-protein] (acyl-ACP). This enzyme utilizes acyl-ACP as fatty acyl donor, but not acyl-CoA. This is Phosphate acyltransferase from Cellvibrio japonicus (strain Ueda107) (Pseudomonas fluorescens subsp. cellulosa).